The chain runs to 187 residues: Peptide deformylase (187 aa).

Fe cation-binding residues include cysteine 96 and histidine 138. Glutamate 139 is a catalytic residue. A Fe cation-binding site is contributed by histidine 142.

The protein belongs to the polypeptide deformylase family. It depends on Fe(2+) as a cofactor.

The catalysed reaction is N-terminal N-formyl-L-methionyl-[peptide] + H2O = N-terminal L-methionyl-[peptide] + formate. Its function is as follows. Removes the formyl group from the N-terminal Met of newly synthesized proteins. Requires at least a dipeptide for an efficient rate of reaction. N-terminal L-methionine is a prerequisite for activity but the enzyme has broad specificity at other positions. The protein is Peptide deformylase of Brachyspira hyodysenteriae (strain ATCC 49526 / WA1).